The chain runs to 196 residues: Pyridoxal 5'-phosphate synthase subunit PdxT (196 aa).

47–49 (GES) is an L-glutamine binding site. Catalysis depends on Cys-79, which acts as the Nucleophile. L-glutamine-binding positions include Arg-106 and 134-135 (IR). Residues His-170 and Glu-172 each act as charge relay system in the active site.

Belongs to the glutaminase PdxT/SNO family. In the presence of PdxS, forms a dodecamer of heterodimers. Only shows activity in the heterodimer.

It carries out the reaction aldehydo-D-ribose 5-phosphate + D-glyceraldehyde 3-phosphate + L-glutamine = pyridoxal 5'-phosphate + L-glutamate + phosphate + 3 H2O + H(+). The catalysed reaction is L-glutamine + H2O = L-glutamate + NH4(+). The protein operates within cofactor biosynthesis; pyridoxal 5'-phosphate biosynthesis. Functionally, catalyzes the hydrolysis of glutamine to glutamate and ammonia as part of the biosynthesis of pyridoxal 5'-phosphate. The resulting ammonia molecule is channeled to the active site of PdxS. This Bacillus mycoides (strain KBAB4) (Bacillus weihenstephanensis) protein is Pyridoxal 5'-phosphate synthase subunit PdxT.